A 262-amino-acid polypeptide reads, in one-letter code: tRNA pseudouridine synthase A (262 aa).

The active-site Nucleophile is the aspartate 51. A substrate-binding site is contributed by tyrosine 109.

The protein belongs to the tRNA pseudouridine synthase TruA family. As to quaternary structure, homodimer.

It catalyses the reaction uridine(38/39/40) in tRNA = pseudouridine(38/39/40) in tRNA. Functionally, formation of pseudouridine at positions 38, 39 and 40 in the anticodon stem and loop of transfer RNAs. This Legionella pneumophila (strain Paris) protein is tRNA pseudouridine synthase A.